A 250-amino-acid polypeptide reads, in one-letter code: DNA repair protein RecO (250 aa).

The protein belongs to the RecO family.

Functionally, involved in DNA repair and RecF pathway recombination. This is DNA repair protein RecO from Rhodospirillum centenum (strain ATCC 51521 / SW).